A 340-amino-acid polypeptide reads, in one-letter code: Phospho-N-acetylmuramoyl-pentapeptide-transferase (340 aa).

Transmembrane regions (helical) follow at residues 3–23, 53–73, 79–99, 119–139, 144–164, 176–196, 200–220, 227–247, 250–270, and 315–335; these read MSLIAGVAAFVLTVLAMPHFI, GGTVFLVVAILISLIFNFHVF, AYGATAGILFVILIYGIIGFL, MALQIVAGLLFYFIHVLPSGT, IGGLTIQLGVFYVLFVLFWIV, IDGLASVSVVISLIAYGIIAF, ELAILTIIITMIGALLGFFVF, VFMGDVGSLSLGAMLAVISIA, VEWTLLLIGVVYVLETASVML, and VDAFLWTIGALASSITLWMVL.

Belongs to the glycosyltransferase 4 family. MraY subfamily. Requires Mg(2+) as cofactor.

Its subcellular location is the cell membrane. The enzyme catalyses UDP-N-acetyl-alpha-D-muramoyl-L-alanyl-gamma-D-glutamyl-L-lysyl-D-alanyl-D-alanine + di-trans,octa-cis-undecaprenyl phosphate = Mur2Ac(oyl-L-Ala-gamma-D-Glu-L-Lys-D-Ala-D-Ala)-di-trans,octa-cis-undecaprenyl diphosphate + UMP. The protein operates within cell wall biogenesis; peptidoglycan biosynthesis. Functionally, catalyzes the initial step of the lipid cycle reactions in the biosynthesis of the cell wall peptidoglycan: transfers peptidoglycan precursor phospho-MurNAc-pentapeptide from UDP-MurNAc-pentapeptide onto the lipid carrier undecaprenyl phosphate, yielding undecaprenyl-pyrophosphoryl-MurNAc-pentapeptide, known as lipid I. In Streptococcus thermophilus (strain CNRZ 1066), this protein is Phospho-N-acetylmuramoyl-pentapeptide-transferase.